A 346-amino-acid chain; its full sequence is Small glutamine-rich tetratricopeptide repeat-containing protein 2 (346 aa).

TPR repeat units follow at residues 102–135, 136–169, 170–203, and 205–229; these read AEDL…LPTN, AIYY…DPSY, FRGY…EGDN, and TEAM…EKTV. The interval 219-249 is disordered; it reads VEQSLNLEKTVPEQSRDADVDASQGASAGGL. Over residues 228–237 the composition is skewed to basic and acidic residues; sequence TVPEQSRDAD. Thr-308 is subject to Phosphothreonine. The tract at residues 325–346 is disordered; sequence GNLFGGAGAQSTDETPDNENKQ.

It belongs to the SGT family. In terms of assembly, interacts with HSC82, HSP104, MDY2, SSA1 and SSA2.

It localises to the cytoplasm. Co-chaperone that binds to the molecular chaperone Hsp70 (SSA1 and SSA2). Regulates Hsp70 ATPase activity. Required for recovery from heat shock. The polypeptide is Small glutamine-rich tetratricopeptide repeat-containing protein 2 (SGT2) (Saccharomyces cerevisiae (strain ATCC 204508 / S288c) (Baker's yeast)).